The following is a 59-amino-acid chain: UPF0434 protein Rsph17025_2896 (59 aa).

It belongs to the UPF0434 family.

The sequence is that of UPF0434 protein Rsph17025_2896 from Cereibacter sphaeroides (strain ATCC 17025 / ATH 2.4.3) (Rhodobacter sphaeroides).